A 277-amino-acid polypeptide reads, in one-letter code: uncharacterized protein (277 aa).

The disordered stretch occupies residues 1 to 20 (MVTTSPPPTLTNSVQPHPTT).

This is an uncharacterized protein from Acidianus convivator (ATV).